The chain runs to 287 residues: NAD kinase (287 aa).

The active-site Proton acceptor is the aspartate 66. NAD(+)-binding positions include 66–67 (DG), 137–138 (ND), arginine 148, arginine 165, aspartate 167, and 178–183 (TAYSMS).

This sequence belongs to the NAD kinase family. The cofactor is a divalent metal cation.

It localises to the cytoplasm. The catalysed reaction is NAD(+) + ATP = ADP + NADP(+) + H(+). Involved in the regulation of the intracellular balance of NAD and NADP, and is a key enzyme in the biosynthesis of NADP. Catalyzes specifically the phosphorylation on 2'-hydroxyl of the adenosine moiety of NAD to yield NADP. The sequence is that of NAD kinase from Chlorobium limicola (strain DSM 245 / NBRC 103803 / 6330).